A 328-amino-acid chain; its full sequence is Stress response kinase A (328 aa).

The Proton acceptor role is filled by aspartate 201. The Mg(2+) site is built by asparagine 206 and aspartate 217. The active site involves aspartate 217.

The protein belongs to the SrkA/RdoA protein kinase family. Monomer. It depends on Mg(2+) as a cofactor.

The protein resides in the cytoplasm. The enzyme catalyses L-seryl-[protein] + ATP = O-phospho-L-seryl-[protein] + ADP + H(+). The catalysed reaction is L-threonyl-[protein] + ATP = O-phospho-L-threonyl-[protein] + ADP + H(+). Functionally, a protein kinase that phosphorylates Ser and Thr residues. Probably acts to suppress the effects of stress linked to accumulation of reactive oxygen species. Probably involved in the extracytoplasmic stress response. This Salmonella choleraesuis (strain SC-B67) protein is Stress response kinase A.